The following is a 166-amino-acid chain: Stress response protein NhaX (166 aa).

Belongs to the universal stress protein A family.

This chain is Stress response protein NhaX (nhaX), found in Bacillus subtilis (strain 168).